Consider the following 1050-residue polypeptide: uncharacterized protein (1050 aa).

Coiled coils occupy residues 1–420, 463–627, and 692–981; these read MEKV…TAKM, YSLL…IREL, and NDSK…NLLS.

This is an uncharacterized protein from Arabidopsis thaliana (Mouse-ear cress).